A 539-amino-acid chain; its full sequence is Chaperonin GroEL (539 aa).

ATP contacts are provided by residues Thr29–Pro32, Asp86–Thr90, Gly413, Asp477–Leu479, and Asp493.

The protein belongs to the chaperonin (HSP60) family. Forms a cylinder of 14 subunits composed of two heptameric rings stacked back-to-back. Interacts with the co-chaperonin GroES.

It is found in the cytoplasm. It catalyses the reaction ATP + H2O + a folded polypeptide = ADP + phosphate + an unfolded polypeptide.. Functionally, together with its co-chaperonin GroES, plays an essential role in assisting protein folding. The GroEL-GroES system forms a nano-cage that allows encapsulation of the non-native substrate proteins and provides a physical environment optimized to promote and accelerate protein folding. The protein is Chaperonin GroEL of Clostridium perfringens (strain 13 / Type A).